We begin with the raw amino-acid sequence, 159 residues long: Cyclic pyranopterin monophosphate synthase (159 aa).

Substrate is bound by residues 75–77 (LCH) and 113–114 (ME). D128 is an active-site residue.

The protein belongs to the MoaC family. Homohexamer; trimer of dimers.

The catalysed reaction is (8S)-3',8-cyclo-7,8-dihydroguanosine 5'-triphosphate = cyclic pyranopterin phosphate + diphosphate. The protein operates within cofactor biosynthesis; molybdopterin biosynthesis. Functionally, catalyzes the conversion of (8S)-3',8-cyclo-7,8-dihydroguanosine 5'-triphosphate to cyclic pyranopterin monophosphate (cPMP). This chain is Cyclic pyranopterin monophosphate synthase, found in Aliivibrio fischeri (strain MJ11) (Vibrio fischeri).